Here is a 333-residue protein sequence, read N- to C-terminus: Probable endo-beta-1,4-glucanase B (333 aa).

Residues methionine 1–alanine 17 form the signal peptide. N-linked (GlcNAc...) asparagine glycosylation is found at asparagine 37 and asparagine 100. The Proton donor role is filled by glutamate 160. Catalysis depends on glutamate 267, which acts as the Nucleophile.

It belongs to the glycosyl hydrolase 5 (cellulase A) family.

It is found in the secreted. It catalyses the reaction Endohydrolysis of (1-&gt;4)-beta-D-glucosidic linkages in cellulose, lichenin and cereal beta-D-glucans.. Functionally, has endoglucanase activity on substrates containing beta-1,4 glycosidic bonds, like in carboxymethylcellulose (CMC), hydroxyethylcellulose (HEC) and beta-glucan. Involved in the degradation of complex natural cellulosic substrates. This chain is Probable endo-beta-1,4-glucanase B (eglB), found in Aspergillus oryzae (strain ATCC 42149 / RIB 40) (Yellow koji mold).